We begin with the raw amino-acid sequence, 390 residues long: 2-deoxy-scyllo-inosose synthase (390 aa).

Residues Asp42, 73-76 (EQNK), 105-109 (GVTGN), 129-130 (TT), 140-142 (SLK), and 151-152 (KN) each bind NAD(+). The active site involves Lys142. A Co(2+)-binding site is contributed by Glu184. The active site involves Glu244. Residues His247 and His263 each contribute to the Co(2+) site. The interval 371 to 390 (PPRPAAARTDDAATVLGGAG) is disordered.

This sequence belongs to the sugar phosphate cyclases superfamily. DOI synthase family. NAD(+) is required as a cofactor. The cofactor is Co(2+).

It catalyses the reaction D-glucose 6-phosphate = 2-deoxy-L-scyllo-inosose + phosphate. The protein operates within metabolic intermediate biosynthesis; 2-deoxystreptamine biosynthesis; 2-deoxystreptamine from D-glucose 6-phosphate: step 1/4. Its pathway is antibiotic biosynthesis; kanamycin biosynthesis. Its function is as follows. Catalyzes the intramolecular carbocycle formation from D-glucose-6-phosphate to 2-deoxy-scyllo-inosose (DOI). This chain is 2-deoxy-scyllo-inosose synthase (kanC), found in Streptomyces kanamyceticus.